A 433-amino-acid chain; its full sequence is GTPase Der (433 aa).

2 consecutive EngA-type G domains span residues 5-167 and 174-349; these read KKVL…GEVG and IKVG…DQLE. GTP-binding positions include 11–18, 58–62, 119–122, 180–187, 227–231, and 292–295; these read GRPNVGKS, DTGGF, NKVD, GKPNSGKS, DTAGI, and SKWD. A KH-like domain is found at 349–429; it reads ELKTSTPDLN…PILVELKEKI (81 aa).

Belongs to the TRAFAC class TrmE-Era-EngA-EngB-Septin-like GTPase superfamily. EngA (Der) GTPase family. In terms of assembly, associates with the 50S ribosomal subunit.

Its function is as follows. GTPase that plays an essential role in the late steps of ribosome biogenesis. This is GTPase Der from Borreliella burgdorferi (strain ATCC 35210 / DSM 4680 / CIP 102532 / B31) (Borrelia burgdorferi).